The sequence spans 197 residues: uncharacterized protein (197 aa).

The next 6 membrane-spanning stretches (helical) occupy residues 5–23 (LNLL…GLRF), 27–46 (ISFA…MLRF), 55–77 (VIAG…LAYT), 87–109 (LSLL…VIRI), 116–138 (VFAF…LPTG), and 153–174 (FVEF…CLVF).

The protein resides in the cell membrane. This is an uncharacterized protein from Archaeoglobus fulgidus (strain ATCC 49558 / DSM 4304 / JCM 9628 / NBRC 100126 / VC-16).